Here is a 358-residue protein sequence, read N- to C-terminus: C-X-C chemokine receptor type 4 (358 aa).

The segment at 1 to 25 is important for chemokine binding and signaling; that stretch reads MDGFSGGIDINIFDSNSTENGSGDF. At 1-44 the chain is on the extracellular side; it reads MDGFSGGIDINIFDSNSTENGSGDFEDFSEPCFMHDNSDFNRIF. Asparagine 16 and asparagine 20 each carry an N-linked (GlcNAc...) asparagine glycan. 2 disulfide bridges follow: cysteine 32–cysteine 281 and cysteine 113–cysteine 190. Residues 45-67 form a helical membrane-spanning segment; the sequence is LPTIYSFIFLLGIIGNGLVVVVM. Topologically, residues 68-81 are cytoplasmic; sequence GYQKKSRTMTDKYR. A helical membrane pass occupies residues 82–103; it reads LHLSVADLLFVFTLPFWSVDAA. The tract at residues 98–101 is chemokine binding; sequence WSVD. The Extracellular portion of the chain corresponds to 104–114; the sequence is IGWYFKEFLCK. Residues 115 to 134 form a helical membrane-spanning segment; sequence AVHVIYTVNLYSSVLILAFI. Positions 117-121 are chemokine binding; that stretch reads HVIYT. Residues 135–158 are Cytoplasmic-facing; sequence SLDRYLAIVHATNSQGSRKMLADK. Residues 139 to 151 are involved in dimerization; when bound to chemokine; the sequence is YLAIVHATNSQGS. A helical membrane pass occupies residues 159–178; it reads VVYAGVWLPALLLTVPDLVF. At 179 to 202 the chain is on the extracellular side; that stretch reads ARVSDENGQFVCDRIYPIDNRETW. Residues 190–194 form a chemokine binding, important for signaling region; sequence CDRIY. Residues 203–223 traverse the membrane as a helical segment; the sequence is TVGFRFLHITVGLILPGLIIL. The Cytoplasmic segment spans residues 224-248; that stretch reads ICYCVIISKLSHSKGHQKRKALKTT. The helical transmembrane segment at 249–268 threads the bilayer; it reads VILILAFFACWLPYYVCLTT. Residues 269-289 lie on the Extracellular side of the membrane; it reads DTFMLLGLLKADCIWENTLHK. Residues 290–309 form a helical membrane-spanning segment; the sequence is AISITEALAFFHCCLNPILY. The Cytoplasmic segment spans residues 310–358; the sequence is AFLGAKFKTSAQNAFTSVSRGSSLKILSKKRAGLSSVSTESESSSFHSS. Positions 338 to 358 are disordered; it reads KKRAGLSSVSTESESSSFHSS. Residues 344-358 are compositionally biased toward low complexity; sequence SSVSTESESSSFHSS.

The protein belongs to the G-protein coupled receptor 1 family. Monomer. Can form dimers. In terms of processing, sulfation is required for efficient binding of cxcl12/sdf-1alpha and promotes its dimerization. Post-translationally, O- and N-glycosylated.

The protein resides in the cell membrane. Its subcellular location is the cytoplasm. The protein localises to the nucleus. It is found in the early endosome. It localises to the late endosome. The protein resides in the lysosome. In terms of biological role, receptor for the C-X-C chemokine cxcl12/sdf-1. Transduces a signal by increasing the intracellular calcium ion level. Signaling with cxcl12/sdf-1 mediates the directional movement of mesodermal cells during gastrulation. May play a role in the migration of embryonic presumptive primordial germ cells (pPGCs). May also be involved in regulating migration of hematopoietic stem cells into the larval liver. This Xenopus tropicalis (Western clawed frog) protein is C-X-C chemokine receptor type 4.